Reading from the N-terminus, the 658-residue chain is Probable transketolase (658 aa).

Substrate is bound at residue His24. Thiamine diphosphate contacts are provided by residues His64 and 113–115; that span reads GPL. Mg(2+) is bound at residue Asp154. Residues Gly155 and Asn184 each contribute to the thiamine diphosphate site. Residues Asn184 and Ile186 each coordinate Mg(2+). Substrate-binding residues include His259, Arg354, and Ser381. His259 lines the thiamine diphosphate pocket. Catalysis depends on Glu408, which acts as the Proton donor. Phe434 serves as a coordination point for thiamine diphosphate. Substrate-binding residues include His458, Asp466, and Arg517.

It belongs to the transketolase family. In terms of assembly, homodimer. Requires Mg(2+) as cofactor. It depends on Ca(2+) as a cofactor. Mn(2+) is required as a cofactor. Co(2+) serves as cofactor. The cofactor is thiamine diphosphate.

The catalysed reaction is D-sedoheptulose 7-phosphate + D-glyceraldehyde 3-phosphate = aldehydo-D-ribose 5-phosphate + D-xylulose 5-phosphate. In terms of biological role, necessary for high-efficiency recombination chromosomal DNA during genetic transformation. Functionally, catalyzes the transfer of a two-carbon ketol group from a ketose donor to an aldose acceptor, via a covalent intermediate with the cofactor thiamine pyrophosphate. The chain is Probable transketolase (tkt) from Streptococcus pneumoniae serotype 4 (strain ATCC BAA-334 / TIGR4).